A 387-amino-acid chain; its full sequence is Polyphosphate kinase (387 aa).

Mg(2+) is bound by residues Arg-347 and Arg-377.

This sequence belongs to the polyphosphate kinase 1 (PPK1) family. Mg(2+) serves as cofactor. In terms of processing, an intermediate of this reaction is the autophosphorylated ppk in which a phosphate is covalently linked to a histidine residue through a N-P bond.

It catalyses the reaction [phosphate](n) + ATP = [phosphate](n+1) + ADP. Functionally, catalyzes the reversible transfer of the terminal phosphate of ATP to form a long-chain polyphosphate (polyP). The chain is Polyphosphate kinase (ppk) from Aphanizomenon baltica.